Here is a 172-residue protein sequence, read N- to C-terminus: RNA silencing suppressor p19 (172 aa).

Residues 1–15 (MERAIQGNDAREQAY) are compositionally biased toward basic and acidic residues. Residues 1–37 (MERAIQGNDAREQAYGERWNGGSGSSTSPFKLPDESP) are disordered.

This sequence belongs to the tombusvirus protein p19 family. In terms of assembly, homodimer.

Functionally, viral suppressor of RNA silencing which binds specifically to silencing RNAs (siRNAs). Acts as a molecular caliper to specifically select siRNAs based on the length of the duplex region of the RNA. The protein is RNA silencing suppressor p19 of Capsicum annuum (Capsicum pepper).